A 472-amino-acid chain; its full sequence is Kynureninase 2 (472 aa).

Pyridoxal 5'-phosphate contacts are provided by residues L133, T134, 162 to 165 (FPSD), D247, H250, and Y272. An N6-(pyridoxal phosphate)lysine modification is found at K273. The pyridoxal 5'-phosphate site is built by W314 and N342.

The protein belongs to the kynureninase family. As to quaternary structure, homodimer. Pyridoxal 5'-phosphate serves as cofactor.

Its subcellular location is the cytoplasm. It carries out the reaction L-kynurenine + H2O = anthranilate + L-alanine + H(+). The catalysed reaction is 3-hydroxy-L-kynurenine + H2O = 3-hydroxyanthranilate + L-alanine + H(+). It functions in the pathway amino-acid degradation; L-kynurenine degradation; L-alanine and anthranilate from L-kynurenine: step 1/1. Its pathway is cofactor biosynthesis; NAD(+) biosynthesis; quinolinate from L-kynurenine: step 2/3. Its function is as follows. Catalyzes the cleavage of L-kynurenine (L-Kyn) and L-3-hydroxykynurenine (L-3OHKyn) into anthranilic acid (AA) and 3-hydroxyanthranilic acid (3-OHAA), respectively. The polypeptide is Kynureninase 2 (kyn-2) (Neurospora crassa (strain ATCC 24698 / 74-OR23-1A / CBS 708.71 / DSM 1257 / FGSC 987)).